Reading from the N-terminus, the 490-residue chain is GTPase Der (490 aa).

EngA-type G domains follow at residues 3 to 166 (PVVA…MDDV) and 203 to 376 (IKLA…DSST). GTP contacts are provided by residues 9–16 (GRPNVGKS), 56–60 (DTGGI), 118–121 (NKTD), 209–216 (GRPNVGKS), 256–260 (DTAGV), and 321–324 (NKWD). The 85-residue stretch at 377–461 (RRVSTAMLTR…PIRIQFKEGE (85 aa)) folds into the KH-like domain.

The protein belongs to the TRAFAC class TrmE-Era-EngA-EngB-Septin-like GTPase superfamily. EngA (Der) GTPase family. In terms of assembly, associates with the 50S ribosomal subunit.

In terms of biological role, GTPase that plays an essential role in the late steps of ribosome biogenesis. The sequence is that of GTPase Der from Salmonella enteritidis PT4 (strain P125109).